The chain runs to 268 residues: Glutamate racemase (268 aa).

Substrate-binding positions include 13–14 and 45–46; these read DS and YG. Cys77 acts as the Proton donor/acceptor in catalysis. 78–79 is a binding site for substrate; that stretch reads NT. Cys185 (proton donor/acceptor) is an active-site residue. Residue 186 to 187 coordinates substrate; it reads TH.

Belongs to the aspartate/glutamate racemases family.

The catalysed reaction is L-glutamate = D-glutamate. It participates in cell wall biogenesis; peptidoglycan biosynthesis. In terms of biological role, provides the (R)-glutamate required for cell wall biosynthesis. This chain is Glutamate racemase, found in Vibrio campbellii (strain ATCC BAA-1116).